Consider the following 448-residue polypeptide: Adenylosuccinate synthetase (448 aa).

Residues 22-28 (GDEGKGK) and 50-52 (GHT) contribute to the GTP site. D23 serves as the catalytic Proton acceptor. D23 and G50 together coordinate Mg(2+). Residues 23–26 (DEGK), 48–51 (NAGH), T139, R153, Q234, T249, and R321 contribute to the IMP site. Catalysis depends on H51, which acts as the Proton donor. Residue 317–323 (SVTGRPR) participates in substrate binding. GTP contacts are provided by residues R323, 349-351 (KLD), and 431-433 (STG).

It belongs to the adenylosuccinate synthetase family. In terms of assembly, homodimer. The cofactor is Mg(2+).

The protein resides in the cytoplasm. The enzyme catalyses IMP + L-aspartate + GTP = N(6)-(1,2-dicarboxyethyl)-AMP + GDP + phosphate + 2 H(+). It functions in the pathway purine metabolism; AMP biosynthesis via de novo pathway; AMP from IMP: step 1/2. Functionally, plays an important role in the de novo pathway of purine nucleotide biosynthesis. Catalyzes the first committed step in the biosynthesis of AMP from IMP. This chain is Adenylosuccinate synthetase, found in Paraburkholderia phymatum (strain DSM 17167 / CIP 108236 / LMG 21445 / STM815) (Burkholderia phymatum).